A 160-amino-acid chain; its full sequence is Protein-export protein SecB (160 aa).

This sequence belongs to the SecB family. Homotetramer, a dimer of dimers. One homotetramer interacts with 1 SecA dimer.

It localises to the cytoplasm. One of the proteins required for the normal export of preproteins out of the cell cytoplasm. It is a molecular chaperone that binds to a subset of precursor proteins, maintaining them in a translocation-competent state. It also specifically binds to its receptor SecA. The sequence is that of Protein-export protein SecB from Nitrosomonas eutropha (strain DSM 101675 / C91 / Nm57).